A 226-amino-acid chain; its full sequence is Biosynthetic peptidoglycan transglycosylase (226 aa).

The chain crosses the membrane as a helical span at residues 8-28 (FFGWTWFVMWRFLLLLALLLL).

The protein belongs to the glycosyltransferase 51 family.

It localises to the cell inner membrane. The catalysed reaction is [GlcNAc-(1-&gt;4)-Mur2Ac(oyl-L-Ala-gamma-D-Glu-L-Lys-D-Ala-D-Ala)](n)-di-trans,octa-cis-undecaprenyl diphosphate + beta-D-GlcNAc-(1-&gt;4)-Mur2Ac(oyl-L-Ala-gamma-D-Glu-L-Lys-D-Ala-D-Ala)-di-trans,octa-cis-undecaprenyl diphosphate = [GlcNAc-(1-&gt;4)-Mur2Ac(oyl-L-Ala-gamma-D-Glu-L-Lys-D-Ala-D-Ala)](n+1)-di-trans,octa-cis-undecaprenyl diphosphate + di-trans,octa-cis-undecaprenyl diphosphate + H(+). It participates in cell wall biogenesis; peptidoglycan biosynthesis. Its function is as follows. Peptidoglycan polymerase that catalyzes glycan chain elongation from lipid-linked precursors. In Shewanella frigidimarina (strain NCIMB 400), this protein is Biosynthetic peptidoglycan transglycosylase.